An 865-amino-acid chain; its full sequence is Alanine--tRNA ligase (865 aa).

His554, His558, Cys656, and His660 together coordinate Zn(2+).

The protein belongs to the class-II aminoacyl-tRNA synthetase family. Zn(2+) is required as a cofactor.

It is found in the cytoplasm. The enzyme catalyses tRNA(Ala) + L-alanine + ATP = L-alanyl-tRNA(Ala) + AMP + diphosphate. Its function is as follows. Catalyzes the attachment of alanine to tRNA(Ala) in a two-step reaction: alanine is first activated by ATP to form Ala-AMP and then transferred to the acceptor end of tRNA(Ala). Also edits incorrectly charged Ser-tRNA(Ala) and Gly-tRNA(Ala) via its editing domain. The chain is Alanine--tRNA ligase from Francisella tularensis subsp. mediasiatica (strain FSC147).